We begin with the raw amino-acid sequence, 418 residues long: AP-1 complex subunit mu (418 aa).

An MHD domain is found at 176 to 417; sequence NNEAYFDVTE…VTKAGKFQVR (242 aa).

Belongs to the adaptor complexes medium subunit family. In terms of assembly, adaptor protein complex 1 (AP-1) is a heterotetramer composed of two large adaptins (gamma- and beta'-type subunits), a medium adaptin (mu-type subunit AP47) and a small adaptin (sigma-type subunit AP19). In terms of processing, regulated by phosphorylation.

Its subcellular location is the golgi apparatus. The protein resides in the cytoplasmic vesicle. It localises to the clathrin-coated vesicle membrane. Functionally, component of the adapter complexes which link clathrin to receptors in coated vesicles. Clathrin-associated protein complexes are believed to interact with the cytoplasmic tails of membrane proteins, leading to their selection and concentration. AP47 is a subunit of the plasma membrane adapter. This Diplobatis ommata (Ocellated electric ray) protein is AP-1 complex subunit mu.